The following is a 320-amino-acid chain: uncharacterized protein (320 aa).

A run of 7 helical transmembrane segments spans residues 24 to 44 (FEFS…IFFI), 65 to 85 (FVLS…LWSL), 105 to 125 (TTSC…FIVV), 132 to 152 (SWFV…IAIL), 179 to 199 (ISLT…IYTF), 226 to 246 (MIPI…YFGY), and 253 to 275 (TSRW…MLSL).

Its subcellular location is the membrane. This is an uncharacterized protein from Caenorhabditis elegans.